We begin with the raw amino-acid sequence, 714 residues long: Probable serine/threonine-protein kinase At1g09600 (714 aa).

A disordered region spans residues 1–64; it reads MGCNCTKGTR…NVGFEERSND (64 aa). Gly2 carries N-myristoyl glycine lipidation. Positions 16–27 are enriched in low complexity; sequence VDNSNSIVSNVN. Positions 31-46 are enriched in basic residues; that stretch reads RRSKPKKTPKKKKKSK. The Protein kinase domain occupies 163–447; that stretch reads FEKLEKIGQG…TASALESEFF (285 aa). ATP contacts are provided by residues 169–177 and Lys192; that span reads IGQGTYSSV. The Proton acceptor role is filled by Asp287. Positions 471 to 498 are enriched in basic and acidic residues; that stretch reads KAQEEEAKRKKDTSSKQNDSKQVSRESK. Disordered regions lie at residues 471–579 and 693–714; these read KAQE…RKEL and VDKK…ANGR. Polar residues-rich tracts occupy residues 506–528 and 556–573; these read NAES…NSDK and GVSS…GSSR.

This sequence belongs to the protein kinase superfamily. Ser/Thr protein kinase family.

This Arabidopsis thaliana (Mouse-ear cress) protein is Probable serine/threonine-protein kinase At1g09600.